The primary structure comprises 275 residues: Succinate dehydrogenase [ubiquinone] iron-sulfur subunit, mitochondrial (275 aa).

A mitochondrion-targeting transit peptide spans 1–24 (MFSRRIQVLSPFLKHFVNRNARMM). Residues 57–137 (PEVKPKLQKY…PTKIYPLPHC (81 aa)) enclose the 2Fe-2S ferredoxin-type domain. Residues C98, C103, C106, and C118 each contribute to the [2Fe-2S] cluster site. The 4Fe-4S ferredoxin-type domain occupies 178-208 (DRAKLDGLYECILCACCSTSCPSYWWNSEEY). [4Fe-4S] cluster is bound by residues C188, C191, and C194. C198 is a [3Fe-4S] cluster binding site. W203 contacts a ubiquinone. [3Fe-4S] cluster-binding residues include C245 and C251. C255 serves as a coordination point for [4Fe-4S] cluster.

Belongs to the succinate dehydrogenase/fumarate reductase iron-sulfur protein family. As to quaternary structure, component of complex II composed of four subunits: a flavoprotein (FP), an iron-sulfur protein (IP), and a cytochrome b composed of a large and a small subunit. The cofactor is [2Fe-2S] cluster. [3Fe-4S] cluster serves as cofactor. It depends on [4Fe-4S] cluster as a cofactor.

The protein resides in the mitochondrion inner membrane. It catalyses the reaction a quinone + succinate = fumarate + a quinol. The protein operates within carbohydrate metabolism; tricarboxylic acid cycle; fumarate from succinate (eukaryal route): step 1/1. Iron-sulfur protein (IP) subunit of succinate dehydrogenase (SDH) that is involved in complex II of the mitochondrial electron transport chain and is responsible for transferring electrons from succinate to ubiquinone (coenzyme Q). The protein is Succinate dehydrogenase [ubiquinone] iron-sulfur subunit, mitochondrial (sdh2) of Schizosaccharomyces pombe (strain 972 / ATCC 24843) (Fission yeast).